Consider the following 2181-residue polypeptide: MRVNTPSLLICGPMISQADAAYLPQVRSNLVHNKNLSYLREAVSELPNLWLRLVREEPSLGEIDVALFLDNLSQWVKGNSTQPTASRDSRNTQWAVLTVLVQIVEYMEYLDNFSSRDEDGCGHLDAHAALLDHLHEGGIQGLCIGLLTALALACAPSHTEIAKYGAVAVRLALCCGAYIDLNEAKSPAKTICVTTRWPGDDGDDKGDIDRKCDEQLQAILDKYPDAYKSVQTDVSTATITSNEGNVLALLTELEKDGAISKRIDLHGRYHYGGNQAALDKLLQLSSALPMLQFPRRSRLVVPVRNNCNGNIVEDNTALHEMALRCILVENAEWFKTISSSISANTRQAQLLVLGPVNCVPRSLLLRSPQPISLSVSGKADNIYPDQSIAIIGSSCCFPGAENPRQLWEFIRTKQTRGVVDAAGSFDCSFFRKSPREAEYMDPQQRLGLHLAQEALESGGYFSPSSSATKNVGCYLGISSCDYEDNVNSHPPTAYSFTGTARAFASGRISHFFGLTGPSMVIDTACSSSGVAINTACRAIQSGECTMALAGGINLISREARTQENLAAASFLSPTGQCRPFDSKANGYRRGEGGGLVLLKKLSSAVADGDVVLGVIAATAVNQSEGNKSITLPSSESQTSLYRRVLESANMKPRHISYVEAHGTGTQKGDPIECQSIRTVFGGTLRPACRQLHVGSIKSNIGHSEAASGIAALLKVLQMLHHRVIPPQANFEELNPAISPLHDDNIEISRQTKPWEERFRAALVNNYGASGTNAAMLVCQPPSIQHSLPLFPNRPCHYPILLTSHSNESLQLYCRNILRFIENQNNVDSDEEVLANTAFHLAQRQDHSLSFRLTFSVSSIEELKSKLQQQSTSQSYKDGPIQKHSGQPVVVVLAGQTGRRVRLSHEIYASSELLQRHLGRCDRALQTMGFTSLFPGIFDTEPVEDLVQAHCMLFSLQYSVAMSWVDSGLKIDALVGHSLGQLTALCISGMLSLQDGLKLISGRASLIQSKWGAECGAMLSVDADAETVQNLADSLPAGYKVEIACYNSSQSHVVVGTKAAITAFEKAADLRGVSLRRLAISHGFHSEMIDGILPDYNKLVQGLVLHPPAIAIEPCSQSGHSWANATPEIIARQSREPVYFANAISRLEKRFGSCIWLEAGWGSAGVNMARRALTHGPTRSLSTHSFYPAALGEPDSVKALADTTINLWNAGIRVQFWLYHRSQTGSPAPLELPLHPFMKSEYLLPVVKHSKKAQNEKVGQPVIQEKATLVSLIGKTQNAGVQTVEYSINQNSEEYSVYVRGRTVFEHFLAPVSMYIESATRAFRLLSTHKLVSFSTSASMELKNLKLHAPFGFDLQKSLRMILRKLGEDAWEFRVESHPIHEKERGSILQATGVITLQEVYSHLAPHRPVLRRLYDRCEELGKDVSASVVQGDFIKKIINSVARYDDRYIGVRSITSKGFETVAHVFEPEIASQFNPTSPFNPLLLDNFLLIAEIQANNLGGVTPDEIYVGNGFDAATAYTNAEDSEPSTKGHWVGLYSFDHQENDGILCDIFIFCAERKILSMTILGAKFQKIAISSLKRALKTINGVPQTSGGRTPSSSITEFISGDDASPCPPIPGADKPIFIREDDFGSMTTSGHMDEENHLIPEYDVISGSSRSTSSSPPSLESRSQAMETEEITEGAGSALFNLLSNHLNYPKGLSPDTPLGALGLDSLVAIQLQSDIEQMFGKNSQLMDINESSTFSTLFHTIFPQQQTDQFGFVPLHDQTGKDRLESAVPLRLGYSHIKHAAPSFNDSLDRSNTLFIRQVPHAMDALKQNISSTIKAAGFHDFFSDVHPRQRSLVLAYIVQAFRELGCDIRSLRVGDELPSVQFKPKYQNLMNRLFDILGSEGVINVLNKRYLGGLASFPERSAEDMHKAILNDYPSYHPDHKLLHTTGARLADCISGKVDPLQILFQNAASIKLLEDVYVKSPMFGTGNLLLGEFMNCLFSYNKTPDRLNHIRILEIGAGTGATTQLVVDRLLACNVDFTYTFTDVSAALVASAREKLTTRYGQHQRFDMEFETLNIEKEPPASFAQSYDLVISANCIHATRDLRKSCSNIEKLLRKDGGMLCLLELTRPLEWLDCVFGLLDGWWRFDDHRTYALAGEQDWKTILLQSGFDHIDWTDDGSREAQQLRLITAWR.

The tract at residues 74 to 180 (QWVKGNSTQP…LALCCGAYID (107 aa)) is N-terminal acylcarrier protein transacylase domain (SAT). The Ketosynthase family 3 (KS3) domain occupies 347-779 (QAQLLVLGPV…GTNAAMLVCQ (433 aa)). Catalysis depends on for beta-ketoacyl synthase activity residues cysteine 525, histidine 661, and histidine 702. Positions 891–1193 (VLAGQTGRRV…SFYPAALGEP (303 aa)) are malonyl-CoA:ACP transacylase (MAT) domain. Serine 977 functions as the For acyl/malonyl transferase activity in the catalytic mechanism. Residues 1269-1401 (VSLIGKTQNA…GVITLQEVYS (133 aa)) form an N-terminal hotdog fold region. The PKS/mFAS DH domain occupies 1269–1579 (VSLIGKTQNA…FQKIAISSLK (311 aa)). The segment at 1276 to 1573 (QNAGVQTVEY…TILGAKFQKI (298 aa)) is product template (PT) domain. Residues 1425–1579 (SASVVQGDFI…FQKIAISSLK (155 aa)) are C-terminal hotdog fold. The segment covering 1587 to 1603 (GVPQTSGGRTPSSSITE) has biased composition (polar residues). 2 disordered regions span residues 1587–1618 (GVPQ…PIPG) and 1652–1675 (ISGS…AMET). Positions 1653–1670 (SGSSRSTSSSPPSLESRS) are enriched in low complexity. Residues 1677 to 1753 (EITEGAGSAL…TLFHTIFPQQ (77 aa)) form the Carrier domain. Serine 1713 carries the O-(pantetheine 4'-phosphoryl)serine modification. Residues 1982–2164 (EFMNCLFSYN…QSGFDHIDWT (183 aa)) are methyltransferase (CMeT) domain.

It participates in secondary metabolite biosynthesis; terpenoid biosynthesis. Functionally, non-reducing polyketide synthase; part of the gene cluster that mediates the biosynthesis of the diterpenoid pyrones subglutinols A and B. The first step of the pathway is the synthesis of the alpha-pyrone moiety by the polyketide synthase dpmaA via condensation of one acetyl-CoA starter unit with 3 malonyl-CoA units and 2 methylations. The alpha-pyrone is then combined with geranylgeranyl pyrophosphate (GGPP) formed by the GGPP synthase dpmaD through the action of the prenyltransferase dpmaC to yield a linear alpha-pyrone diterpenoid. Subsequent steps in the diterpenoid pyrone biosynthetic pathway involve the decalin core formation, which is initiated by the epoxidation of the C10-C11 olefin by the FAD-dependent oxidoreductase dpmaE, and is followed by a cyclization cascade catalyzed by the terpene cyclase dpmaB. The dehydrogenase dpmaF is then involved in tetrahydrofuran (THF) ring formation at the C5 unit to complete the formation of subglutinols A and B. The chain is Non-reducing polyketide synthase dpmaA from Metarhizium anisopliae (Entomophthora anisopliae).